A 404-amino-acid chain; its full sequence is Probable tRNA sulfurtransferase (404 aa).

Positions 61–166 (QTLVTGLPKI…HDATYMMAQV (106 aa)) constitute a THUMP domain. ATP-binding positions include 184-185 (ML), 209-210 (HF), R266, G288, and Q297.

It belongs to the ThiI family.

It is found in the cytoplasm. It carries out the reaction [ThiI sulfur-carrier protein]-S-sulfanyl-L-cysteine + a uridine in tRNA + 2 reduced [2Fe-2S]-[ferredoxin] + ATP + H(+) = [ThiI sulfur-carrier protein]-L-cysteine + a 4-thiouridine in tRNA + 2 oxidized [2Fe-2S]-[ferredoxin] + AMP + diphosphate. The enzyme catalyses [ThiS sulfur-carrier protein]-C-terminal Gly-Gly-AMP + S-sulfanyl-L-cysteinyl-[cysteine desulfurase] + AH2 = [ThiS sulfur-carrier protein]-C-terminal-Gly-aminoethanethioate + L-cysteinyl-[cysteine desulfurase] + A + AMP + 2 H(+). It functions in the pathway cofactor biosynthesis; thiamine diphosphate biosynthesis. In terms of biological role, catalyzes the ATP-dependent transfer of a sulfur to tRNA to produce 4-thiouridine in position 8 of tRNAs, which functions as a near-UV photosensor. Also catalyzes the transfer of sulfur to the sulfur carrier protein ThiS, forming ThiS-thiocarboxylate. This is a step in the synthesis of thiazole, in the thiamine biosynthesis pathway. The sulfur is donated as persulfide by IscS. The chain is Probable tRNA sulfurtransferase from Lysinibacillus sphaericus (strain C3-41).